The sequence spans 206 residues: Probable GTP-binding protein EngB (206 aa).

One can recognise an EngB-type G domain in the interval 23-197 (QGIEVAFAGR…ERVLDKWFGY (175 aa)). Residues 31-38 (GRSNAGKS), 58-62 (GRTQL), 76-79 (DLPG), 143-146 (TKAD), and 176-178 (FSS) contribute to the GTP site. The Mg(2+) site is built by S38 and T60.

The protein belongs to the TRAFAC class TrmE-Era-EngA-EngB-Septin-like GTPase superfamily. EngB GTPase family. Requires Mg(2+) as cofactor.

Functionally, necessary for normal cell division and for the maintenance of normal septation. In Pseudoalteromonas atlantica (strain T6c / ATCC BAA-1087), this protein is Probable GTP-binding protein EngB.